A 507-amino-acid chain; its full sequence is Hexokinase-5 (507 aa).

Residues 4–24 (AAAVGTAVVVAAAVGVAVVLA) form a helical membrane-spanning segment. In terms of domain architecture, Hexokinase spans 44 to 498 (RKVAAVIEDV…SGIGAALLAA (455 aa)). A hexokinase small subdomain region spans residues 99 to 237 (TGNEQGLFYA…GLDMKIAALV (139 aa)). Positions 113, 114, and 115 each coordinate ADP. Residues T203, K204, N238, and D239 each contribute to the D-glucose site. The hexokinase large subdomain stretch occupies residues 238–487 (NDTVGTLAGG…SSVVTKLAND (250 aa)). T262 contributes to the ADP binding site. Positions 265, 293, and 324 each coordinate D-glucose. G452 contributes to the ADP binding site.

This sequence belongs to the hexokinase family. As to expression, expressed in roots, leaves, flowers, immature seeds, endosperm and seed coat.

The protein localises to the plastid. Its subcellular location is the chloroplast outer membrane. It catalyses the reaction a D-hexose + ATP = a D-hexose 6-phosphate + ADP + H(+). The catalysed reaction is D-fructose + ATP = D-fructose 6-phosphate + ADP + H(+). It carries out the reaction D-glucose + ATP = D-glucose 6-phosphate + ADP + H(+). Its pathway is carbohydrate metabolism; hexose metabolism. It functions in the pathway carbohydrate degradation; glycolysis; D-glyceraldehyde 3-phosphate and glycerone phosphate from D-glucose: step 1/4. Its function is as follows. Fructose and glucose phosphorylating enzyme. Functions as a glucose sensor for plant growth and photosynthesis. Is essential for pollen development, germination, and tube growth. Its activity is necessary for the starch utilization pathway during pollen germination and tube growth, as well as for starch biosynthesis during pollen maturation. The protein is Hexokinase-5 (HXK5) of Oryza sativa subsp. japonica (Rice).